The following is a 45-amino-acid chain: Large ribosomal subunit protein bL34 (45 aa).

Residues 26–45 are disordered; that stretch reads RAGRSILSARRSKGRSQLSA.

This sequence belongs to the bacterial ribosomal protein bL34 family.

The protein is Large ribosomal subunit protein bL34 of Parafrankia sp. (strain EAN1pec).